A 243-amino-acid chain; its full sequence is MIIIPAIDLKNGCCVRLEQGLMEKDTVFNDDPGAQAAEWQRQGGEILHIVDLDGAFAGEPKNRSAIEAIVKSVTIPTQLGGGIRDIATIEAYLSLGIGRVIIGTAAQRNPAFVKEACAKFAGKIVVGIDAKNGMVAVQGWAEVTGITATELARQFEGDGVSAIIYTDISRDGMMQGPNIQATKALAEAINIPVIASGGLSSLQDIENLIAIESSGVTGVITGKAIYSGAINLAEAIALTKKQR.

The Proton acceptor role is filled by Asp8. Asp129 serves as the catalytic Proton donor.

The protein belongs to the HisA/HisF family.

Its subcellular location is the cytoplasm. It catalyses the reaction 1-(5-phospho-beta-D-ribosyl)-5-[(5-phospho-beta-D-ribosylamino)methylideneamino]imidazole-4-carboxamide = 5-[(5-phospho-1-deoxy-D-ribulos-1-ylimino)methylamino]-1-(5-phospho-beta-D-ribosyl)imidazole-4-carboxamide. It participates in amino-acid biosynthesis; L-histidine biosynthesis; L-histidine from 5-phospho-alpha-D-ribose 1-diphosphate: step 4/9. This chain is 1-(5-phosphoribosyl)-5-[(5-phosphoribosylamino)methylideneamino] imidazole-4-carboxamide isomerase, found in Citrifermentans bemidjiense (strain ATCC BAA-1014 / DSM 16622 / JCM 12645 / Bem) (Geobacter bemidjiensis).